Consider the following 399-residue polypeptide: Probable aspartate/prephenate aminotransferase (399 aa).

L-aspartate contacts are provided by Gly-39, Trp-125, and Asn-175. The residue at position 239 (Lys-239) is an N6-(pyridoxal phosphate)lysine. Arg-375 provides a ligand contact to L-aspartate.

It belongs to the class-I pyridoxal-phosphate-dependent aminotransferase family. In terms of assembly, homodimer. It depends on pyridoxal 5'-phosphate as a cofactor.

The protein localises to the cytoplasm. The enzyme catalyses L-aspartate + 2-oxoglutarate = oxaloacetate + L-glutamate. It carries out the reaction L-arogenate + 2-oxoglutarate = prephenate + L-glutamate. Its function is as follows. Catalyzes the reversible conversion of aspartate and 2-oxoglutarate to glutamate and oxaloacetate. Can also transaminate prephenate in the presence of glutamate. This is Probable aspartate/prephenate aminotransferase (aatA) from Rickettsia bellii (strain RML369-C).